The chain runs to 418 residues: Glutamate-1-semialdehyde 2,1-aminomutase (418 aa).

Lysine 262 is modified (N6-(pyridoxal phosphate)lysine).

The protein belongs to the class-III pyridoxal-phosphate-dependent aminotransferase family. HemL subfamily. It depends on pyridoxal 5'-phosphate as a cofactor.

Its subcellular location is the cytoplasm. The enzyme catalyses (S)-4-amino-5-oxopentanoate = 5-aminolevulinate. Its pathway is porphyrin-containing compound metabolism; protoporphyrin-IX biosynthesis; 5-aminolevulinate from L-glutamyl-tRNA(Glu): step 2/2. The protein is Glutamate-1-semialdehyde 2,1-aminomutase (hemL) of Archaeoglobus fulgidus (strain ATCC 49558 / DSM 4304 / JCM 9628 / NBRC 100126 / VC-16).